A 293-amino-acid polypeptide reads, in one-letter code: 4-hydroxy-tetrahydrodipicolinate synthase (293 aa).

Pyruvate is bound at residue threonine 45. Tyrosine 133 serves as the catalytic Proton donor/acceptor. Lysine 161 serves as the catalytic Schiff-base intermediate with substrate. Isoleucine 203 provides a ligand contact to pyruvate.

Belongs to the DapA family. As to quaternary structure, homotetramer; dimer of dimers.

The protein resides in the cytoplasm. It catalyses the reaction L-aspartate 4-semialdehyde + pyruvate = (2S,4S)-4-hydroxy-2,3,4,5-tetrahydrodipicolinate + H2O + H(+). It participates in amino-acid biosynthesis; L-lysine biosynthesis via DAP pathway; (S)-tetrahydrodipicolinate from L-aspartate: step 3/4. Its function is as follows. Catalyzes the condensation of (S)-aspartate-beta-semialdehyde [(S)-ASA] and pyruvate to 4-hydroxy-tetrahydrodipicolinate (HTPA). This chain is 4-hydroxy-tetrahydrodipicolinate synthase, found in Aliivibrio fischeri (strain ATCC 700601 / ES114) (Vibrio fischeri).